The sequence spans 387 residues: MARTKSKPRKRTTVRKARRSVKRRTTTKGTKRKTAGDPVTKAKRGVATSSPFAAHHAVRMNPFSGATTQPKIPDGGFTSSLSRRLQNVVEVTNASNEGIMHLVMAPTMGVPICVTHTTEGASTRSGATLKPSYLGFLGQGVGLETKVGGVIKWPIANTDTGDVINAADFAKWRVVSQGLQITLNNVDDENDGWFEAVRFNWRNDNEDICLTSLDGTDTGNVIGAAPNLNGLPLLTANIVEMPGYKSGLLKDIKDYQFMLHPQQTRHDPVEITKSIDFVGGTDLNYDTQSKKANLGDSAAGTLLKQGLVDQNMDWMYIRIHPRSNTGAAGQTGSKLICNYIQNLEFAFSPDSDLATYMTTNRMDPKSAKINDQLNNNQDAANKKREFN.

Positions 1–33 are enriched in basic residues; sequence MARTKSKPRKRTTVRKARRSVKRRTTTKGTKRK. Disordered stretches follow at residues 1–47 and 365–387; these read MART…RGVA and KSAK…REFN. 2 short sequence motifs (nuclear localization signal) span residues 8–15 and 30–37; these read PRKRTTVR and TKRKTAGD. Residues 370-379 show a composition bias toward low complexity; that stretch reads NDQLNNNQDA.

Its subcellular location is the host nucleus. The protein localises to the virion. Its function is as follows. Self-assembles to form the virion icosahedral capsid. This Chaetoceros protobacilladnavirus 2 (Chaetoceros sp. DNA virus 7) protein is Capsid protein.